We begin with the raw amino-acid sequence, 1187 residues long: Trafficking protein particle complex II-specific subunit 120 homolog (1187 aa).

The disordered stretch occupies residues 1037 to 1059; it reads GTTAKTDSSKEPGDGSSRSADES.

The protein belongs to the TRS120 family. Part of the multisubunit TRAPP (transport protein particle) II complex composed of BET3, BET5, TRS20, TRS23, TRS31, TRS33, TRS65, TRS85, TRS120 and TRS130.

The protein localises to the golgi apparatus. It is found in the trans-Golgi network. Its subcellular location is the early endosome. Specific subunit of the TRAPP II complex, a highly conserved vesicle tethering complex that is required for the proper transport of proteins in post-Golgi trafficking pathways to the growing cell plate in mitotic active cells. This is Trafficking protein particle complex II-specific subunit 120 homolog from Oryza sativa subsp. japonica (Rice).